We begin with the raw amino-acid sequence, 378 residues long: Forkhead box protein F1 (378 aa).

The segment at 1-45 (MSAPDKQQPPHGGGTGGGGGAGGQAMDPAAAGPTKAKKTNAGVRR) is disordered. Residues 11–23 (HGGGTGGGGGAGG) are compositionally biased toward gly residues. The span at 24 to 42 (QAMDPAAAGPTKAKKTNAG) shows a compositional bias: low complexity. Residues 47 to 138 (EKPPYSYIAL…EFMFEEGSFR (92 aa)) constitute a DNA-binding region (fork-head).

Expressed primarily in lung in alveolar type II pneumocyte cells, and to a lesser extent in placenta, stomach, intestine and colon.

It localises to the nucleus. In terms of biological role, probable transcription activator for a number of lung-specific genes. The polypeptide is Forkhead box protein F1 (Foxf1) (Mus musculus (Mouse)).